The primary structure comprises 296 residues: Probable endonuclease 4 (296 aa).

Zn(2+) contacts are provided by H68, H109, E144, D178, H181, H213, D226, H228, and E258.

This sequence belongs to the AP endonuclease 2 family. Zn(2+) serves as cofactor.

It catalyses the reaction Endonucleolytic cleavage to 5'-phosphooligonucleotide end-products.. Endonuclease IV plays a role in DNA repair. It cleaves phosphodiester bonds at apurinic or apyrimidinic (AP) sites, generating a 3'-hydroxyl group and a 5'-terminal sugar phosphate. In Staphylococcus saprophyticus subsp. saprophyticus (strain ATCC 15305 / DSM 20229 / NCIMB 8711 / NCTC 7292 / S-41), this protein is Probable endonuclease 4.